Here is a 1291-residue protein sequence, read N- to C-terminus: Cytoplasmic FMR1-interacting protein (1291 aa).

Positions 1270–1291 (PSVISSSSHYQDPQKLRQSINN) are disordered. Residues 1271-1291 (SVISSSSHYQDPQKLRQSINN) are compositionally biased toward polar residues.

It belongs to the CYFIP family. As to quaternary structure, interacts with Fmr1 and Rac1. Component of the WAVE complex composed of Hem/Kette, Scar/Wave and Cyfip where it binds through its C-terminus directly to Hem. In terms of tissue distribution, in the embryo, expressed mainly in the gut and in the developing central nervous system where high levels of expression are found in the CNS neuropile. Expression in the gut diminishes as development proceeds (at protein level). In the adult, expressed specifically in the nervous system.

The protein resides in the cytoplasm. Its function is as follows. Plays a role in guidance and morphology of central and peripheral axons and in synaptic morphology. Also required for formation of cell membrane protrusions and for bristle development. Plays a role in regulating mitochondrial activity, energy metabolism and membrane potential which maintains normal gamma-aminobutyric acid (GABA) signaling and ensures normal social behavior. The sequence is that of Cytoplasmic FMR1-interacting protein from Drosophila melanogaster (Fruit fly).